The primary structure comprises 431 residues: MAGEVEGEGCRVSWGVLVALLLLPLPSLCSLTAGKQLQVIKLFEGRVVRYNESKNFCYQRTYEPKWSDVWTKIQIRVNSTKMIRVTQVENEEKLKEMETFNMFDFFSSFLKEKLNDSFIYVDLYNNKTCIKVHVSDTDTYYSVALSRGFDPRLFFVFLCGLLLFFYGDTLSRSQIFYYSTGITVGMLASMLILVFMLSKLMPKKSPFVALLLGGWSVSIYVIQLVFKNLQAICTEYWQYLLGYLGIVGFVSFAFCYKYGPLENERSINILNWTLQLIGLLLMYISVQIRHIAVTMVVIAFCTKQIEYPVRWIYILYRKIKLKRGKPSPPRLLTEEEYRKQGDVETRKALEELRGYCSSPDFAAWKTVSRIQSPKRFADFVEGSSHLTPNEVSVHEHEYGFGGSFLEDELFGEDSDVEEEMEIEPVLYQDLR.

The first 29 residues, methionine 1–cysteine 29, serve as a signal peptide directing secretion. 5 helical membrane passes run proline 151–serine 171, isoleucine 175–phenylalanine 195, proline 206–phenylalanine 226, tyrosine 236–tyrosine 256, and serine 266–valine 286. An a; required for its colocalization with lamins at the nuclear envelope region spans residues phenylalanine 176–glutamine 287. A Nuclear localization signal motif is present at residues arginine 317–lysine 325. The interval proline 326 to glutamate 395 is b; required for interaction with ran. Positions proline 326–arginine 431 are interaction with banf1-a and banf1-b. The tract at residues serine 368 to arginine 375 is BAF-binding site (BBS); essential for interaction with banf1-a, banf1-b and ran.

It belongs to the NEMP family. As to quaternary structure, homooligomer. Interacts with banf1-a and banf1-b. Interacts with ran-gtp. Phosphorylated.

Its subcellular location is the nucleus inner membrane. The protein resides in the nucleus envelope. In concert with ran, required for proper eye development. May be involved in the expression of early eye marker genes. Contributes to nuclear envelope stiffness in germ cells. Required for fertility. Essential for normal erythropoiesis. Required for efficient nuclear envelope opening and enucleation during the late stages of erythroblast maturation. In Xenopus tropicalis (Western clawed frog), this protein is Nuclear envelope integral membrane protein 1 (nemp1).